We begin with the raw amino-acid sequence, 164 residues long: Coenzyme Q-binding protein coq10, mitochondrial (164 aa).

Belongs to the COQ10 family. Interacts with coenzyme Q.

Its subcellular location is the mitochondrion inner membrane. Its function is as follows. Required for the function of coenzyme Q in the respiratory chain. May serve as a chaperone or may be involved in the transport of Q6 from its site of synthesis to the catalytic sites of the respiratory complexes. This is Coenzyme Q-binding protein coq10, mitochondrial from Schizosaccharomyces pombe (strain 972 / ATCC 24843) (Fission yeast).